The primary structure comprises 382 residues: ATP phosphoribosyltransferase regulatory subunit (382 aa).

The protein belongs to the class-II aminoacyl-tRNA synthetase family. HisZ subfamily. As to quaternary structure, heteromultimer composed of HisG and HisZ subunits.

The protein resides in the cytoplasm. Its pathway is amino-acid biosynthesis; L-histidine biosynthesis; L-histidine from 5-phospho-alpha-D-ribose 1-diphosphate: step 1/9. Functionally, required for the first step of histidine biosynthesis. May allow the feedback regulation of ATP phosphoribosyltransferase activity by histidine. This Albidiferax ferrireducens (strain ATCC BAA-621 / DSM 15236 / T118) (Rhodoferax ferrireducens) protein is ATP phosphoribosyltransferase regulatory subunit.